A 61-amino-acid chain; its full sequence is MIKYAIIFAVISLIAGALGFSGVAAGAAGIAKVLFGLFLILAVIFIVLAALGVGAAKKMMK.

2 consecutive transmembrane segments (helical) span residues Ala5–Ala25 and Val33–Val53.

It belongs to the UPF0391 family.

It is found in the cell membrane. The protein is UPF0391 membrane protein Pnap_0032 of Polaromonas naphthalenivorans (strain CJ2).